The primary structure comprises 377 residues: O-phospho-L-seryl-tRNA:Cys-tRNA synthase (377 aa).

Pyridoxal 5'-phosphate is bound by residues 83 to 84 (AR), asparagine 188, and 211 to 213 (SGH). Lysine 214 carries the post-translational modification N6-(pyridoxal phosphate)lysine.

The protein belongs to the SepCysS family. Homodimer. Interacts with SepRS. Requires pyridoxal 5'-phosphate as cofactor.

The enzyme catalyses O-phospho-L-seryl-tRNA(Cys) + hydrogen sulfide + H(+) = L-cysteinyl-tRNA(Cys) + phosphate. Converts O-phospho-L-seryl-tRNA(Cys) (Sep-tRNA(Cys)) to L-cysteinyl-tRNA(Cys) (Cys-tRNA(Cys)). The protein is O-phospho-L-seryl-tRNA:Cys-tRNA synthase of Methanothermobacter thermautotrophicus (strain ATCC 29096 / DSM 1053 / JCM 10044 / NBRC 100330 / Delta H) (Methanobacterium thermoautotrophicum).